Consider the following 440-residue polypeptide: Trigger factor (440 aa).

A PPIase FKBP-type domain is found at 163–248 (GDTVVIDFKG…VHEVKTKELP (86 aa)).

It belongs to the FKBP-type PPIase family. Tig subfamily.

The protein localises to the cytoplasm. It catalyses the reaction [protein]-peptidylproline (omega=180) = [protein]-peptidylproline (omega=0). Involved in protein export. Acts as a chaperone by maintaining the newly synthesized protein in an open conformation. Functions as a peptidyl-prolyl cis-trans isomerase. This chain is Trigger factor, found in Lactiplantibacillus plantarum (strain ATCC BAA-793 / NCIMB 8826 / WCFS1) (Lactobacillus plantarum).